The following is a 62-amino-acid chain: UPF0291 protein CLB_2550 (62 aa).

The protein belongs to the UPF0291 family.

The protein localises to the cytoplasm. The sequence is that of UPF0291 protein CLB_2550 from Clostridium botulinum (strain ATCC 19397 / Type A).